Reading from the N-terminus, the 76-residue chain is Small ribosomal subunit protein bS18 (76 aa).

It belongs to the bacterial ribosomal protein bS18 family. In terms of assembly, part of the 30S ribosomal subunit. Forms a tight heterodimer with protein bS6.

In terms of biological role, binds as a heterodimer with protein bS6 to the central domain of the 16S rRNA, where it helps stabilize the platform of the 30S subunit. The polypeptide is Small ribosomal subunit protein bS18 (Desulfitobacterium hafniense (strain Y51)).